Reading from the N-terminus, the 166-residue chain is Interleukin-3 (166 aa).

The first 27 residues, 1-27 (MVLASSTTSILCMLLPLLMLFHQGLQI), serve as a signal peptide directing secretion. Disulfide bonds link cysteine 43–cysteine 106 and cysteine 105–cysteine 166. N-linked (GlcNAc...) asparagine glycosylation is found at asparagine 60 and asparagine 70. The disordered stretch occupies residues 145-166 (SVSRPPQPTSSSDNFRPMTVEC).

It belongs to the IL-3 family. Monomer. Activated T-cells, mast cells, natural killer cells.

It localises to the secreted. Cytokine secreted predominantly by activated T-lymphocytes as well as mast cells and osteoblastic cells that controls the production and differentiation of hematopoietic progenitor cells into lineage-restricted cells. Also stimulates mature basophils, eosinophils, and monocytes to become functionally activated. In addition, plays an important role in neural cell proliferation and survival. Participates as well in bone homeostasis and inhibits osteoclast differentiation by preventing NF-kappa-B nuclear translocation and activation. Mechanistically, exerts its biological effects through a receptor composed of IL3RA subunit and a signal transducing subunit IL3RB. Receptor stimulation results in the rapid activation of JAK2 kinase activity leading to STAT5-mediated transcriptional program. Alternatively, contributes to cell survival under oxidative stress in non-hematopoietic systems by activating pathways mediated by PI3K/AKT and ERK. The protein is Interleukin-3 (Il3) of Rattus norvegicus (Rat).